The sequence spans 200 residues: Glycerol-3-phosphate acyltransferase (200 aa).

The next 4 membrane-spanning stretches (helical) occupy residues 4-24 (ALLA…YWVG), 70-90 (ALGS…FAVI), 110-130 (LGIL…VWLL), and 158-178 (QPLP…GAHR).

The protein belongs to the PlsY family. In terms of assembly, probably interacts with PlsX.

It localises to the cell inner membrane. The catalysed reaction is an acyl phosphate + sn-glycerol 3-phosphate = a 1-acyl-sn-glycero-3-phosphate + phosphate. The protein operates within lipid metabolism; phospholipid metabolism. Functionally, catalyzes the transfer of an acyl group from acyl-phosphate (acyl-PO(4)) to glycerol-3-phosphate (G3P) to form lysophosphatidic acid (LPA). This enzyme utilizes acyl-phosphate as fatty acyl donor, but not acyl-CoA or acyl-ACP. The polypeptide is Glycerol-3-phosphate acyltransferase (Synechococcus sp. (strain JA-2-3B'a(2-13)) (Cyanobacteria bacterium Yellowstone B-Prime)).